A 448-amino-acid polypeptide reads, in one-letter code: Phosphoglucosamine mutase (448 aa).

Catalysis depends on Ser100, which acts as the Phosphoserine intermediate. Mg(2+)-binding residues include Ser100, Asp240, Asp242, and Asp244. Position 100 is a phosphoserine (Ser100).

This sequence belongs to the phosphohexose mutase family. The cofactor is Mg(2+). In terms of processing, activated by phosphorylation.

It catalyses the reaction alpha-D-glucosamine 1-phosphate = D-glucosamine 6-phosphate. Its function is as follows. Catalyzes the conversion of glucosamine-6-phosphate to glucosamine-1-phosphate. The sequence is that of Phosphoglucosamine mutase from Geobacillus thermodenitrificans (strain NG80-2).